Reading from the N-terminus, the 1086-residue chain is NAD(P) transhydrogenase, mitochondrial (1086 aa).

Residues 1–43 (MAHLLKTVVAGCSCPFLSNLGSSKVLPGKRDFVRTLRTHQALW) constitute a mitochondrion transit peptide. At 44-474 (CKSPVKPGIP…TVSMYTKTLT (431 aa)) the chain is on the mitochondrial matrix side. Lys-70 is modified (N6-acetyllysine). At Lys-117 the chain carries N6-succinyllysine. An NAD(+)-binding site is contributed by 182-184 (RVT). The residue at position 224 (Lys-224) is an N6-succinyllysine. NAD(+)-binding positions include Val-237, 257 to 259 (DTR), and Gly-287. Residue Lys-294 is modified to N6-succinyllysine. The NAD(+) site is built by Glu-300 and Leu-319. Lys-331 is modified (N6-succinyllysine). The residue at position 397 (Lys-397) is an N6-acetyllysine. The next 4 helical transmembrane spans lie at 475–493 (TASV…GIVA), 501–521 (MVTT…GVTP), 527–546 (LMSV…LALM), and 558–578 (SLAA…FLVT). Over 579–595 (QRMLDMFKRPTDPPEYN) the chain is Mitochondrial matrix. A run of 5 helical transmembrane segments spans residues 596–616 (YLYL…LYGG), 622–642 (IMYL…STQG), 646–666 (LGNA…LGGL), 672–691 (LLAQ…LTIA), and 702–722 (LVAA…MAEY). Over 723–739 (IVEYPHFAMDATSNFTK) the chain is Cytoplasmic. Helical transmembrane passes span 740-760 (IVAY…LVAY), 778-797 (HALN…PFMA), 801-819 (FTTG…TLMG), 833-853 (VVIT…GFLL), and 857-879 (LLTI…MCVA). Residues 880–1086 (MNRSLANVIL…QAKVRESYQK (207 aa)) are Mitochondrial matrix-facing. NADP(+) is bound by residues Tyr-933, 965-970 (VAGRMP), 1007-1011 (GANDT), 1026-1027 (GM), 1042-1049 (KRSLGVGY), and 1068-1069 (DA). Position 1079 is an N6-succinyllysine (Lys-1079).

It in the N-terminal section; belongs to the AlaDH/PNT family. The protein in the C-terminal section; belongs to the PNT beta subunit family. In terms of assembly, homodimer. As to expression, widely expressed with expression most readily detectable in adrenal, heart, kidney, thyroid and adipose tissues.

It localises to the mitochondrion inner membrane. The catalysed reaction is NAD(+) + NADPH + H(+)(in) = NADH + NADP(+) + H(+)(out). In terms of biological role, the transhydrogenation between NADH and NADP is coupled to respiration and ATP hydrolysis and functions as a proton pump across the membrane. May play a role in reactive oxygen species (ROS) detoxification in the adrenal gland. This is NAD(P) transhydrogenase, mitochondrial (Nnt) from Mus musculus (Mouse).